The following is a 1328-amino-acid chain: ABC transporter G family member 2 (1328 aa).

Residues 53 to 299 (VTARNLSMSI…FEGLGFKLPK (247 aa)) enclose the ABC transporter 1 domain. Position 91–98 (91–98 (GSPGCGKT)) interacts with ATP. Positions 388–665 (ISSQVAVRMR…FGMYFFLKNV (278 aa)) constitute an ABC transmembrane type-2 1 domain. The next 7 helical transmembrane spans lie at 398 to 418 (IIKS…LDLN), 428 to 448 (LIFF…AILF), 477 to 497 (IPIA…MCGL), 504 to 524 (FIYF…FFKM), 534 to 554 (LASV…GFMA), 559 to 579 (IGGW…FEGL), and 642 to 662 (IDLL…YFFL). The disordered stretch occupies residues 670-691 (RASDPKNDKRSKKASKRSKKIK). The span at 678-689 (KRSKKASKRSKK) shows a compositional bias: basic residues. The ABC transporter 2 domain maps to 721 to 960 (VYEVDVKKDG…DLLGYFENHG (240 aa)). 755-762 (GPSGAGKS) is a binding site for ATP. In terms of domain architecture, ABC transmembrane type-2 2 spans 1049–1286 (VRRVQNIRTR…PICPITNGNQ (238 aa)). 6 helical membrane-spanning segments follow: residues 1059–1076 (LMRS…FVRM), 1087–1107 (VSIL…SIPI), 1128–1148 (IYLF…AIIY), 1172–1192 (FISF…ATVL), 1197–1217 (IAHA…GFMI), and 1303–1323 (AVIF…LKFI).

Belongs to the ABC transporter superfamily. ABCG family. PDR (TC 3.A.1.205) subfamily.

It localises to the endosome membrane. Functionally, required for endocytosis and endosomal pH regulation. The protein is ABC transporter G family member 2 (abcG2) of Dictyostelium discoideum (Social amoeba).